Reading from the N-terminus, the 420-residue chain is MAKKTPGTNGKQKLFCSFCGKEQDAVKRLVAGPGVYICDECISLCNEIIAEDHEHSHEKSEVFSEIPNPVDIKSILDQYVIGQDHAKKALSVAVYNHYKRVNLKEKKSDVEIEKSNILLIGPTGSGKTLLAQTLARIIKVPFAIVDATALTEAGYVGEDVENIILKLIQNAENDIKKAEIGIIYIDEVDKIARKSDSASITRDVSGEGVQQALLKIIEGTIANVPPQGGRKHPHQEYLQVDTKNILFILGGAFVDLPNIIKSRTGVKTIGFGSEEQRIQAENKDTLMEQVIPEDLIKFGLIPEFIGRLPIVATLQELNVDMLKQIFREPKNSVLKQYTRLLELENVKLTFHEDAIDKIAELAIKRESGARGLRAIVENIMLDLMFDIPSRKDIEEVIITAEVITDRVTPTLILKKESKIA.

Residues 3-57 form the ClpX-type ZB domain; that stretch reads KKTPGTNGKQKLFCSFCGKEQDAVKRLVAGPGVYICDECISLCNEIIAEDHEHSH. Zn(2+)-binding residues include cysteine 16, cysteine 19, cysteine 38, and cysteine 41. 122–129 contacts ATP; sequence PTGSGKTL.

This sequence belongs to the ClpX chaperone family. In terms of assembly, component of the ClpX-ClpP complex. Forms a hexameric ring that, in the presence of ATP, binds to fourteen ClpP subunits assembled into a disk-like structure with a central cavity, resembling the structure of eukaryotic proteasomes.

Its function is as follows. ATP-dependent specificity component of the Clp protease. It directs the protease to specific substrates. Can perform chaperone functions in the absence of ClpP. The polypeptide is ATP-dependent Clp protease ATP-binding subunit ClpX (Leptospira borgpetersenii serovar Hardjo-bovis (strain L550)).